Here is a 610-residue protein sequence, read N- to C-terminus: MTIKFLSESTINRIAAGEVIERPASVVKELVENAVDASSTKIDIILERAGKNLIIISDDGIGMTDKELEIAVERHTTSKFDESDFLNINTFGFRGEALPSIAAISKMLITSKKRDADKAFQIKLIGGNEKQVTISVHNEGTKIEIRDLFFATPARLKFLRADKTELAATVGVVKKIALAHPKISFSLTHDGKNLLKLKGQNKDAETNLKQRIIDVIGDDFIKNAAYIDFKTPDFSICGYTSSPTYNRASSEDQFLFINNRPVKDKLLQIALRVAYQDYLARDRYPICAIFLQINPQLVDVNVHPAKAEVRFHDPDYVRNLLIEAIKNALTNKSHVTSTTIASDALELFKNPLVNKQSPVSKVINVNSKSADYRPTTHSTLNTVPQNHVCQKLIDTLSHAKIEQEVENRIEHEQQIRKQYKLGAAKAQLHTTYIISQTEDSIVITDQHAAHKRLGYEKIKHYLKTEELIKQRLLIPEIVELPNEKKADCLYDHREKLYKLGLTLEKFGEKSIIVTEIPNILGDVNVQKLIQDLADHLSDFGKNIALTELIEHVTETYACHYSIRAGRKLSADEMNALLRQMENTLLSGQCNHGRPTYIELKLKDIERLFGR.

Belongs to the DNA mismatch repair MutL/HexB family.

Functionally, this protein is involved in the repair of mismatches in DNA. It is required for dam-dependent methyl-directed DNA mismatch repair. May act as a 'molecular matchmaker', a protein that promotes the formation of a stable complex between two or more DNA-binding proteins in an ATP-dependent manner without itself being part of a final effector complex. In Rickettsia rickettsii (strain Sheila Smith), this protein is DNA mismatch repair protein MutL.